The following is a 284-amino-acid chain: Orotidine 5'-phosphate decarboxylase (284 aa).

Substrate contacts are provided by residues Asp42, 64-66, 96-105, Tyr237, and Arg255; these read KTH and DRKFADIGNT. Residue Lys98 is the Proton donor of the active site.

The protein belongs to the OMP decarboxylase family.

It carries out the reaction orotidine 5'-phosphate + H(+) = UMP + CO2. It functions in the pathway pyrimidine metabolism; UMP biosynthesis via de novo pathway; UMP from orotate: step 2/2. This chain is Orotidine 5'-phosphate decarboxylase (URA3), found in Magnusiomyces magnusii (Yeast).